A 647-amino-acid chain; its full sequence is Threonine--tRNA ligase (647 aa).

The 61-residue stretch at 1-61 (MIKITFPDGA…EEDGSIEIVT (61 aa)) folds into the TGS domain. The segment at 240–538 (DHRKLGKELD…LIETYKGAFP (299 aa)) is catalytic. Zn(2+) is bound by residues cysteine 334, histidine 385, and histidine 515.

The protein belongs to the class-II aminoacyl-tRNA synthetase family. As to quaternary structure, homodimer. The cofactor is Zn(2+).

The protein resides in the cytoplasm. It carries out the reaction tRNA(Thr) + L-threonine + ATP = L-threonyl-tRNA(Thr) + AMP + diphosphate + H(+). In terms of biological role, catalyzes the attachment of threonine to tRNA(Thr) in a two-step reaction: L-threonine is first activated by ATP to form Thr-AMP and then transferred to the acceptor end of tRNA(Thr). Also edits incorrectly charged L-seryl-tRNA(Thr). This is Threonine--tRNA ligase from Streptococcus agalactiae serotype III (strain NEM316).